A 450-amino-acid polypeptide reads, in one-letter code: Grayanic acid biosynthesis cluster O-methyltransferase (450 aa).

Asp254 lines the S-adenosyl-L-methionine pocket. Residue His301 is the Proton acceptor of the active site.

The protein belongs to the class I-like SAM-binding methyltransferase superfamily. Cation-independent O-methyltransferase family. COMT subfamily.

It functions in the pathway secondary metabolite biosynthesis. Its function is as follows. Non-reducing polyketide synthase; part of the gene cluster that mediates the biosynthesis of orcinol depsidone grayanic acid (GRA), the only major secondary metabolite known in C.grayi. The first step consists in the ring and depside synthesis by PKS16 leading to 4-O-demethylsphaerophorin, involving different orcinol-like rings, one with acetyl CoA and the other with octanoyl CoA as the starter. Further depsidone formation by the GRA cluster-specific cytochrome P450 leads to 4-O-demethylgrayanic acid. Finally, the cluster specific O-methyltransferase probably converts the 4-O-demethylgrayanic acid into grayanic acid. This Cladonia grayi (Gray's cup lichen) protein is Grayanic acid biosynthesis cluster O-methyltransferase.